The following is a 2176-amino-acid chain: Protein eyes shut (2176 aa).

Residues 1–122 are Cytoplasmic-facing; that stretch reads MSNVHQFDTQ…NPNILLPTLR (122 aa). Residues 123 to 143 traverse the membrane as a helical segment; that stretch reads ILARGLLLPALILAILVGSSQ. The region spanning 144-180 is the EGF-like 1 domain; sequence AGFACLSNPCVFGVCIDGLNSSYSCYCIDGYTGIQCQ. Over 144 to 2176 the chain is Extracellular; sequence AGFACLSNPC…DLHGDEPLTV (2033 aa). 21 cysteine pairs are disulfide-bonded: Cys-148/Cys-158, Cys-153/Cys-168, Cys-170/Cys-179, Cys-186/Cys-197, Cys-191/Cys-206, Cys-208/Cys-217, Cys-224/Cys-235, Cys-229/Cys-244, Cys-246/Cys-255, Cys-262/Cys-276, Cys-270/Cys-286, Cys-288/Cys-297, Cys-304/Cys-315, Cys-309/Cys-324, Cys-326/Cys-335, Cys-342/Cys-353, Cys-347/Cys-362, Cys-364/Cys-373, Cys-380/Cys-392, Cys-386/Cys-401, and Cys-403/Cys-412. N-linked (GlcNAc...) asparagine glycosylation is present at Asn-163. One can recognise an EGF-like 2; calcium-binding domain in the interval 182-218; the sequence is NWDECWSSPCQNGGTCVDGVAYYNCTCPEGFSGSNCE. Asn-205 is a glycosylation site (N-linked (GlcNAc...) asparagine). In terms of domain architecture, EGF-like 3; calcium-binding spans 220–256; sequence NVDECMSNPCQNGGLCRDRTNGYICTCQPGYLGSHCE. Positions 258–298 constitute an EGF-like 4 domain; sequence DVAVCETGTGARCQHGGECIEGPGLEFTCDCPAGWHGRICQ. The region spanning 300 to 336 is the EGF-like 5; calcium-binding domain; sequence EINECASSPCQNGGVCVDKLAAYACACPMGYTGINCE. Positions 338-374 constitute an EGF-like 6 domain; sequence EILICADNPCQNNALCLMEEGVPTCYCVPDYHGEKCE. In terms of domain architecture, EGF-like 7; calcium-binding spans 376-413; sequence QYDECQLGPRCMNGGVCIDGVDTFSCSCPPLLTGMLCE. Asn-425 carries N-linked (GlcNAc...) asparagine glycosylation. Low complexity-rich tracts occupy residues 429-447 and 482-502; these read PATQ…MAPP and VTSV…VSVE. Disordered regions lie at residues 429–465, 482–639, 757–783, 802–854, and 902–1014; these read PATQ…SRAS, VTSV…RPTA, RFTT…LPTP, LITT…VEIT, and APPA…GVPE. Positions 514 to 526 are enriched in polar residues; the sequence is GSHSISVEQTTAV. A compositionally biased stretch (acidic residues) spans 548-560; it reads SASESETETEEEI. Low complexity-rich tracts occupy residues 564 to 582 and 596 to 632; these read TTAR…ESPS and TSAS…SEEV. The span at 757–775 shows a compositional bias: polar residues; sequence RFTTVQPPAGVTTTSPTED. Basic residues predominate over residues 811–820; that stretch reads THHHHHHHPH. Pro residues-rich tracts occupy residues 904-922 and 930-955; these read PATP…PSPP and TLPP…PTPP. Residues 1018-1054 form the EGF-like 8 domain; sequence GDVDCIKLGCYNGGTCVTTSEGSRCVCRFDRQGPLCE. Disulfide bonds link Cys-1022/Cys-1033, Cys-1027/Cys-1042, and Cys-1044/Cys-1053. Residues 1059–1266 enclose the Laminin G-like 1 domain; it reads IRNAAFSGDS…GITECGSLAC (208 aa). 3 N-linked (GlcNAc...) asparagine glycosylation sites follow: Asn-1165, Asn-1170, and Asn-1176. In terms of domain architecture, EGF-like 9 spans 1309–1346; sequence EISVCEDNPCQYGGTCVQFPGSGYLCLCPLGKHGHYCE. 3 disulfide bridges follow: Cys-1313–Cys-1324, Cys-1318–Cys-1334, and Cys-1336–Cys-1345. Residues 1353 to 1549 enclose the Laminin G-like 2 domain; that stretch reads LPSFSGSVNG…GVGQCGTREC (197 aa). N-linked (GlcNAc...) asparagine glycosylation is present at Asn-1471. 2 EGF-like domains span residues 1545 to 1581 and 1583 to 1621; these read GTRE…PLCA and PTNP…KNCE. 6 disulfide bridges follow: Cys-1549–Cys-1560, Cys-1554–Cys-1569, Cys-1571–Cys-1580, Cys-1587–Cys-1600, Cys-1594–Cys-1609, and Cys-1611–Cys-1620. N-linked (GlcNAc...) asparagine glycans are attached at residues Asn-1665 and Asn-1861. The region spanning 1692 to 1879 is the Laminin G-like 3 domain; the sequence is EKQRSFSPVP…NIRDCDGTAC (188 aa). EGF-like domains are found at residues 1875–1912 and 1913–1946; these read DGTA…DRCE and YSET…FYCE. Cystine bridges form between Cys-1879/Cys-1890, Cys-1884/Cys-1900, Cys-1902/Cys-1911, Cys-1917/Cys-1928, Cys-1922/Cys-1934, and Cys-1936/Cys-1945. One can recognise a Laminin G-like 4 domain in the interval 1952 to 2166; the sequence is PTTPSFRGNS…TYQGENIGSC (215 aa). 3 N-linked (GlcNAc...) asparagine glycosylation sites follow: Asn-1994, Asn-2035, and Asn-2099. Positions 2080 to 2101 are disordered; that stretch reads GGRSLGSTTPRSTLAGRRKNSS.

It belongs to the EYS family. As to expression, expressed from the beginning of rhabdomere biogenesis (48 hours after pupal formation), when it decorates the entire photoreceptor apical surface.

The protein resides in the membrane. The protein localises to the secreted. Functionally, essential for the formation of matrix-filled interrhabdomeral space: critical for the formation of epithelial lumina in the retina. Acts together with prominin (prom) and the cell adhesion molecule chaoptin (chp) to choreograph the partitioning of rhabdomeres into an open system. This is Protein eyes shut from Drosophila melanogaster (Fruit fly).